Here is a 369-residue protein sequence, read N- to C-terminus: NAD(P)H-quinone oxidoreductase subunit 1, chloroplastic (369 aa).

The next 8 helical transmembrane spans lie at 29 to 49 (IWIIVSILTTIVGVTLGVLVI), 97 to 117 (IWLFNVGPAIVVIPVFLSYLV), 129 to 149 (LGIGVFFWIAVSSIAPLGLLM), 167 to 187 (AAQSISYEIPLALCVLSISLL), 205 to 225 (LLGWNLWRQPIGFLIFFISSL), 255 to 275 (FGLFYVGSYLNLLVSSLFVTV), 305 to 325 (IINAIIGIIITLTKAYLFLFV), and 348 to 368 (FLLPVALGNLLLTASFQILLL).

Belongs to the complex I subunit 1 family. As to quaternary structure, NDH is composed of at least 16 different subunits, 5 of which are encoded in the nucleus.

Its subcellular location is the plastid. It localises to the chloroplast thylakoid membrane. It catalyses the reaction a plastoquinone + NADH + (n+1) H(+)(in) = a plastoquinol + NAD(+) + n H(+)(out). It carries out the reaction a plastoquinone + NADPH + (n+1) H(+)(in) = a plastoquinol + NADP(+) + n H(+)(out). In terms of biological role, NDH shuttles electrons from NAD(P)H:plastoquinone, via FMN and iron-sulfur (Fe-S) centers, to quinones in the photosynthetic chain and possibly in a chloroplast respiratory chain. The immediate electron acceptor for the enzyme in this species is believed to be plastoquinone. Couples the redox reaction to proton translocation, and thus conserves the redox energy in a proton gradient. The protein is NAD(P)H-quinone oxidoreductase subunit 1, chloroplastic of Angiopteris evecta (Mule's foot fern).